Here is a 67-residue protein sequence, read N- to C-terminus: DNA-directed RNA polymerase subunit omega (67 aa).

Belongs to the RNA polymerase subunit omega family. In terms of assembly, the RNAP catalytic core consists of 2 alpha, 1 beta, 1 beta' and 1 omega subunit. When a sigma factor is associated with the core the holoenzyme is formed, which can initiate transcription.

It catalyses the reaction RNA(n) + a ribonucleoside 5'-triphosphate = RNA(n+1) + diphosphate. Its function is as follows. Promotes RNA polymerase assembly. Latches the N- and C-terminal regions of the beta' subunit thereby facilitating its interaction with the beta and alpha subunits. This Acidovorax ebreus (strain TPSY) (Diaphorobacter sp. (strain TPSY)) protein is DNA-directed RNA polymerase subunit omega.